Reading from the N-terminus, the 102-residue chain is uncharacterized protein (102 aa).

Residues M1–T71 form a disordered region. Over M1–D79 the chain is Extracellular. A compositionally biased stretch (polar residues) spans S56–T71. A glycan (N-linked (GlcNAc...) asparagine; by host) is linked at N65. Residues I80 to M97 traverse the membrane as a helical segment. Over R98–Q102 the chain is Cytoplasmic.

This sequence belongs to the HHV-5 UL15A protein family.

It is found in the host membrane. This is an uncharacterized protein from Human cytomegalovirus (strain AD169) (HHV-5).